We begin with the raw amino-acid sequence, 152 residues long: Outer membrane protein assembly factor BamE (152 aa).

The N-terminal stretch at 1 to 32 is a signal peptide; it reads MIDQNHDSEEQAQMQKLTRTVTLTVALTLVSG. Cys33 carries N-palmitoyl cysteine lipidation. Cys33 carries S-diacylglycerol cysteine lipidation. A disordered region spans residues 114 to 152; the sequence is IDRHGDFSRPPSVADERGIGPTDSTNARGNLLNARPDDE.

This sequence belongs to the BamE family. In terms of assembly, part of the Bam complex.

The protein localises to the cell outer membrane. Its function is as follows. Part of the outer membrane protein assembly complex, which is involved in assembly and insertion of beta-barrel proteins into the outer membrane. This is Outer membrane protein assembly factor BamE from Halomonas elongata (strain ATCC 33173 / DSM 2581 / NBRC 15536 / NCIMB 2198 / 1H9).